Here is a 156-residue protein sequence, read N- to C-terminus: Putative pre-16S rRNA nuclease (156 aa).

The protein belongs to the YqgF nuclease family.

It localises to the cytoplasm. Its function is as follows. Could be a nuclease involved in processing of the 5'-end of pre-16S rRNA. This is Putative pre-16S rRNA nuclease from Rickettsia typhi (strain ATCC VR-144 / Wilmington).